We begin with the raw amino-acid sequence, 339 residues long: Heat-inducible transcription repressor HrcA (339 aa).

It belongs to the HrcA family.

Negative regulator of class I heat shock genes (grpE-dnaK-dnaJ and groELS operons). Prevents heat-shock induction of these operons. The polypeptide is Heat-inducible transcription repressor HrcA (Frankia casuarinae (strain DSM 45818 / CECT 9043 / HFP020203 / CcI3)).